The chain runs to 369 residues: RNA pseudouridine synthase 5 (369 aa).

Residues 47–104 (APLLGWIQRIQNGQIQIDGEVVKDPNTLLRSGSKLVYSRLPWKEPDTPYSLEVLYEDD) enclose the S4 RNA-binding domain.

Belongs to the pseudouridine synthase RluA family.

The enzyme catalyses a uridine in RNA = a pseudouridine in RNA. The polypeptide is RNA pseudouridine synthase 5 (Arabidopsis thaliana (Mouse-ear cress)).